The primary structure comprises 246 residues: MVVGPSCQPPCGLCLLLLFLLALPLRSQASAGCYGIPGMPGMPGAPGKDGHDGLQGPKGEPGIPAVPGTRGPKGQKGEPGMPGHRGKNGPRGTSGLPGDPGPRGPPGEPGVEGRYKQKHQSVFTVTRQTTQYPEANALVRFNSVVTNPQGHYNPSTGKFTCEVPGLYYFVYYTSHTANLCVHLNLNLARVASFCDHMFNSKQVSSGGVLLRLQRGDEVWLSVNDYNGMVGIEGSNSVFSGFLLFPD.

A signal peptide spans 1 to 29 (MVVGPSCQPPCGLCLLLLFLLALPLRSQA). Residues 32-113 (GCYGIPGMPG…GPPGEPGVEG (82 aa)) enclose the Collagen-like domain. Residues proline 37, proline 40, proline 43, proline 46, and proline 64 each carry the 4-hydroxyproline modification. Residues 44–116 (GAPGKDGHDG…GEPGVEGRYK (73 aa)) form a disordered region. Residue lysine 76 is modified to 5-hydroxylysine. An O-linked (Gal...) hydroxylysine glycan is attached at lysine 76. 4-hydroxyproline is present on residues proline 82, proline 97, proline 100, and proline 106. The segment covering 99-108 (DPGPRGPPGE) has biased composition (pro residues). Positions 116–246 (KQKHQSVFTV…VFSGFLLFPD (131 aa)) constitute a C1q domain. Cysteine 180 and cysteine 194 are joined by a disulfide.

As to quaternary structure, core component of the complement C1 complex, a calcium-dependent complex composed of 1 molecule of the C1Q subcomplex, 2 molecules of C1R and 2 molecules of C1S. The C1Q subcomplex is composed 18 subunits: 3 chains of C1QA, C1QB, and C1QC trimerize to form 6 collagen-like triple helices connected to six globular ligand-recognition modules (C1q domain). Post-translationally, O-linked glycans consist of Glc-Gal disaccharides bound to the oxygen atom of post-translationally added hydroxyl groups.

The protein localises to the secreted. The protein resides in the cell surface. Its activity is regulated as follows. The C1Q subcomplex is inhibited by sulfated molecules, such as triterpenoid sulfates, heparan sulfate, or chondroitin sulfates. Its function is as follows. Core component of the complement C1 complex, a multiprotein complex that initiates the classical pathway of the complement system, a cascade of proteins that leads to phagocytosis and breakdown of pathogens and signaling that strengthens the adaptive immune system. The classical complement pathway is initiated by the C1Q subcomplex of the C1 complex, which specifically binds IgG or IgM immunoglobulins complexed with antigens, forming antigen-antibody complexes on the surface of pathogens: C1QA, together with C1QB and C1QC, specifically recognizes and binds the Fc regions of IgG or IgM via its C1q domain. Immunoglobulin-binding activates the proenzyme C1R, which cleaves C1S, initiating the proteolytic cascade of the complement system. The C1Q subcomplex is activated by a hexamer of IgG complexed with antigens, while it is activated by a pentameric IgM. The C1Q subcomplex also recognizes and binds phosphatidylserine exposed on the surface of cells undergoing programmed cell death, possibly promoting activation of the complement system. The protein is Complement C1q subcomponent subunit C of Mus musculus (Mouse).